The sequence spans 242 residues: Probable transcriptional regulatory protein NGO_1291 (242 aa).

Belongs to the TACO1 family.

It localises to the cytoplasm. In Neisseria gonorrhoeae (strain ATCC 700825 / FA 1090), this protein is Probable transcriptional regulatory protein NGO_1291.